Here is a 366-residue protein sequence, read N- to C-terminus: Inhibin alpha chain (366 aa).

A signal peptide spans 1–20; it reads MVIQPSLLLLLLLTLQDVDS. The propeptide occupies 21–63; that stretch reads CQGPELVRELVLAKVKALFLDALGPPAMDGEGGGPGIRRLPRR. A propeptide spans 64–233 (inhibin alpha N-terminal region); that stretch reads HALGGFMHRT…APSAGERARR (170 aa). Residues Asn-147 and Asn-269 are each glycosylated (N-linked (GlcNAc...) asparagine). Disulfide bonds link Cys-263–Cys-328, Cys-292–Cys-363, and Cys-296–Cys-365.

Belongs to the TGF-beta family. Dimeric, linked by one or more disulfide bonds. Activin B is a dimer of alpha and beta-B. Inhibin A is a dimer of alpha and beta-A. Inhibin B is a dimer of alpha and beta-B. Interacts with TGFBR3L; this interaction regulates female fertility. Post-translationally, proteolytic processing yields a number of bioactive forms, consisting either solely of the mature alpha chain, of the most N-terminal propeptide linked through a disulfide bond to the mature alpha chain, or of the entire proprotein. As to expression, mainly expressed in ovary and testis. Alpha- and beta-B-subunits are the predominant forms found in testis. Also found in placenta, pituitary, adrenal gland, bone marrow, kidney, spinal cord and brain.

It localises to the secreted. In terms of biological role, inhibins and activins inhibit and activate, respectively, the secretion of follitropin by the pituitary gland. Inhibins/activins are involved in regulating a number of diverse functions such as hypothalamic and pituitary hormone secretion, gonadal hormone secretion, germ cell development and maturation, erythroid differentiation, insulin secretion, nerve cell survival, embryonic axial development or bone growth, depending on their subunit composition. Inhibins appear to oppose the functions of activins. Functionally, inhibin A is a dimer of alpha/INHA and beta-A/INHBA that functions as a feedback regulator in the hypothalamic-pituitary-gonadal (HPG) axis. Inhibits the secretion of FSH from the anterior pituitary gland by acting on pituitary gonadotrope cells. Antagonizes activin A by binding to the proteoglycan, betaglycan, and forming a stable complex with and, thereby, sequestering type II activin receptors while excluding type I receptor. Inhibin B is a dimer of alpha and beta-B that plays a crucial role in the regulation of the reproductive system by inhibiting the secretion of follicle-stimulating hormone (FSH) from the anterior pituitary gland. Thereby, maintains reproductive homeostasis in both males and females. Acts as a more potent suppressor of FSH release than inhibin A. Functions as competitive receptor antagonist binding activin type II receptors with high affinity in the presence of the TGF-beta type III coreceptor/TGFBR3L. The chain is Inhibin alpha chain (Inha) from Rattus norvegicus (Rat).